Here is a 1325-residue protein sequence, read N- to C-terminus: Sperm-specific sodium:proton exchanger (1325 aa).

A signal peptide spans 1–29; the sequence is MKKRVVKLRELVPAVAALAVAVLIQSATG. The disordered stretch occupies residues 28-68; it reads TGSSGGSGHTPTTQATHADDHDLTTHNGTEEHDDGHDDGHD. The Extracellular portion of the chain corresponds to 30-76; that stretch reads SSGGSGHTPTTQATHADDHDLTTHNGTEEHDDGHDDGHDDLHAHAPK. The segment covering 44–68 has biased composition (basic and acidic residues); it reads HADDHDLTTHNGTEEHDDGHDDGHD. A 1,2-diacylglycero-3-phosphate is bound at residue histidine 73. A helical transmembrane segment spans residues 77-96; it reads VIVFISGSCLFGAISRSLFK. The Cytoplasmic portion of the chain corresponds to 97-101; the sequence is KLPIP. The helical transmembrane segment at 102-119 threads the bilayer; that stretch reads YTVVLLILGAILGVVASN. Topologically, residues 120-135 are extracellular; the sequence is VPLVEEHTRDVAHMDP. A helical transmembrane segment spans residues 136–152; the sequence is HVLLQIFLPVLIFESAF. Over 153–162 the chain is Cytoplasmic; the sequence is AMDVHTFMRS. The helical transmembrane segment at 163-188 threads the bilayer; it reads FSQVCILALFGLVVASVLTAVLAMNL. Residues 163–250 are transport core domain; that stretch reads FSQVCILALF…AIVIFNVFMK (88 aa). At 189 to 194 the chain is on the extracellular side; the sequence is FNYNWN. A helical membrane pass occupies residues 195-220; that stretch reads FSEAMMFGAIMSATDPVAVVALLKDL. Residues 221–223 are Cytoplasmic-facing; it reads GAS. Residues 224-249 traverse the membrane as a helical segment; that stretch reads KQLGTIIEGESLLNDGCAIVIFNVFM. The Essential for sodium:proton exchange motif lies at 237-238; the sequence is ND. The Extracellular portion of the chain corresponds to 250–260; sequence KMVFFPQLTST. The chain crosses the membrane as a helical span at residues 261–292; that stretch reads VGQNVLYFLQVAVAGPLWGYAVAKVTVFFLSH. Topologically, residues 293-296 are cytoplasmic; the sequence is IFND. Residues 297 to 319 form a helical membrane-spanning segment; sequence ALVEITITLAATYLTYYIGDIWL. Residues 320 to 322 are Extracellular-facing; the sequence is EVS. A helical membrane pass occupies residues 323-336; sequence GVLAVVVLGLIVNA. Topologically, residues 337–343 are cytoplasmic; that stretch reads EKTSISP. Residues 344–377 form a helical membrane-spanning segment; sequence EVEVFLHRFWEMLAYLANTLIFMMVGVVVTQKAL. At 378–382 the chain is on the extracellular side; the sequence is VAVDK. Residues 383-412 form a helical membrane-spanning segment; that stretch reads MDWFYLIILYLAITIIRGMVISLFSPILSR. The transport core domain stretch occupies residues 383-481; the sequence is MDWFYLIILY…TTIQTLLRIL (99 aa). Topologically, residues 413–418 are cytoplasmic; sequence IGYGLT. The chain crosses the membrane as a helical span at residues 419 to 446; it reads WRNAVIMTWGGLRGAVGLALALVVENLA. Over 447-450 the chain is Extracellular; that stretch reads GNDV. A helical membrane pass occupies residues 451 to 481; it reads IGSKFLFHTAGIVVLTLVINATTIQTLLRIL. The Cytoplasmic portion of the chain corresponds to 482–677; it reads GMSDISIPKR…GKLMYKICHH (196 aa). Positions 575–620 are interacts with the S4 segment of voltage sensor domain; the sequence is FADMMEEARLRMLKAEKISYWKQFEHGMLAREALRLLVQHAEVAAD. The tract at residues 605 to 620 is interacts with the transport core domain; can lock the transporter in the inward conformation; sequence REALRLLVQHAEVAAD. The helical transmembrane segment at 678–708 threads the bilayer; the sequence is MAFEVTINIAIVLNIVPIIMEFVVQDKMASV. The Extracellular segment spans residues 709–724; it reads STMAAPGSTVSSEPSS. Residues 725–752 traverse the membrane as a helical segment; the sequence is LQKIEDALRISNYVFFVIYAIEAIVKIL. Residues 753–760 lie on the Cytoplasmic side of the membrane; it reads GLGRHYIV. The chain crosses the membrane as a helical span at residues 761–784; sequence SHWNKFDAFILVVALVDIIIAETL. Residues 785–795 are Extracellular-facing; sequence LKGSITINLSS. A helical transmembrane segment spans residues 796-822; it reads IKVVKLFRLLRGLRMLRLTKALIPKLI. Residues 796 to 857 are S4 segment of voltage sensor domain; that stretch reads IKVVKLFRLL…EEVGKIIDRM (62 aa). Over 823–1325 the chain is Cytoplasmic; sequence LVVNGKINNQ…EEGAAPRVNV (503 aa). Residues 860–919 are interacts with the S4 segment of voltage sensor domain; sequence NKKILRELKHISETGRLQVVKELGLLQREHPGIAVSVKTRQAIRTILNHSRETIHELQGA. A cNMP-binding domain region spans residues 968-1068; sequence KLIDFIKARA…CETTVQVYFI (101 aa). Residue glycine 1043 participates in 3',5'-cyclic AMP binding. Residues glycine 1043, glutamate 1044, and methionine 1045 each contribute to the 3',5'-cyclic GMP site. Residues methionine 1045, glycine 1046, arginine 1053, and asparagine 1054 each contribute to the 3',5'-cyclic AMP site. Residues arginine 1053 and asparagine 1054 each contribute to the 3',5'-cyclic GMP site. A disordered region spans residues 1237-1325; sequence MLSRKSSGAA…EEGAAPRVNV (89 aa). Positions 1266 to 1280 are enriched in low complexity; the sequence is VSPSVPTKTTPKPKS.

The protein belongs to the monovalent cation:proton antiporter 1 (CPA1) transporter (TC 2.A.36) family. In terms of assembly, homodimer; the dimerization is stabilized in the presence of phosphatidic acids.

It is found in the cell projection. The protein resides in the cilium. Its subcellular location is the flagellum membrane. It catalyses the reaction Na(+)(in) + H(+)(out) = Na(+)(out) + H(+)(in). Its activity is regulated as follows. Gated by voltage and stimulated by cyclic nucleotides which shift the activation voltage closer to resting membrane potential. Not inhibited by common sodium:proton exchanger inhibitors such as amiloride. Functionally, electroneutral sodium:proton antiporter that regulates intracellular pH of sperm along with capacitation and fertility. Activated in response to egg-derived chemoattractants, couples membrane voltage to sodium:proton exchange and transduces membrane hyperpolarization to cytoplasmic alkalization to cAMP signaling and ultimately to sperm motility. This chain is Sperm-specific sodium:proton exchanger, found in Strongylocentrotus purpuratus (Purple sea urchin).